Reading from the N-terminus, the 540-residue chain is Alanine aminotransferase 2, mitochondrial (540 aa).

The N-terminal 46 residues, M1 to F46, are a transit peptide targeting the mitochondrion. Residues G11–P40 form a disordered region. Low complexity predominate over residues L28–P40. An N6-(pyridoxal phosphate)lysine modification is found at K357.

Belongs to the class-I pyridoxal-phosphate-dependent aminotransferase family. Alanine aminotransferase subfamily. In terms of assembly, homodimer. Pyridoxal 5'-phosphate is required as a cofactor. Post-translationally, the N-terminus is blocked. As to expression, expressed in shoots, essentially in leaves and flowers, mostly in vascular tissues. Also detected in stems and roots.

It localises to the mitochondrion. It catalyses the reaction L-alanine + 2-oxoglutarate = pyruvate + L-glutamate. Its pathway is photosynthesis; C4 acid pathway. It functions in the pathway amino-acid degradation; L-alanine degradation via transaminase pathway; pyruvate from L-alanine: step 1/1. This is Alanine aminotransferase 2, mitochondrial (ALAAT2) from Arabidopsis thaliana (Mouse-ear cress).